We begin with the raw amino-acid sequence, 223 residues long: Carnitine transport permease protein OpuCD (223 aa).

Residues Phe22–Leu202 form the ABC transmembrane type-1 domain. 5 consecutive transmembrane segments (helical) span residues Leu27–Ile47, Ile63–Gly83, Val87–Ile107, Ala148–Gly168, and Ala182–Leu202.

Belongs to the binding-protein-dependent transport system permease family. The complex is composed of two ATP-binding proteins (OpuCA), two transmembrane proteins (OpuCB and OpuCD) and a solute-binding protein (OpuCC).

Its subcellular location is the cell membrane. In terms of biological role, part of the ABC transporter complex OpuCABCD involved in carnitine uptake. Probably responsible for the translocation of the substrate across the membrane. Involved, with BetL and GbuABC, in osmoprotection and cryoprotection of Listeria. Can also mediate weak glycine betaine transport. The sequence is that of Carnitine transport permease protein OpuCD (opuCD) from Listeria monocytogenes serotype 1/2a (strain 10403S).